The following is a 460-amino-acid chain: uncharacterized protein (460 aa).

The TRAM domain occupies 8 to 66 (PVEKNEFIDVVFEDLTHDGAGVAKVKGYPIFVKNGLPGEEAQIKIIKVKKNFAFGRLMK). [4Fe-4S] cluster is bound by residues cysteine 79, cysteine 85, cysteine 88, and cysteine 166. Residues glutamine 290, tyrosine 319, glutamate 340, and aspartate 388 each coordinate S-adenosyl-L-methionine. Cysteine 415 serves as the catalytic Nucleophile.

The protein belongs to the class I-like SAM-binding methyltransferase superfamily. RNA M5U methyltransferase family.

This is an uncharacterized protein from Bacillus cereus (strain ATCC 10987 / NRS 248).